We begin with the raw amino-acid sequence, 293 residues long: 4-hydroxy-tetrahydrodipicolinate synthase (293 aa).

Residue T47 coordinates pyruvate. Y135 (proton donor/acceptor) is an active-site residue. K163 functions as the Schiff-base intermediate with substrate in the catalytic mechanism. Position 205 (V205) interacts with pyruvate.

This sequence belongs to the DapA family. As to quaternary structure, homotetramer; dimer of dimers.

It localises to the cytoplasm. The catalysed reaction is L-aspartate 4-semialdehyde + pyruvate = (2S,4S)-4-hydroxy-2,3,4,5-tetrahydrodipicolinate + H2O + H(+). Its pathway is amino-acid biosynthesis; L-lysine biosynthesis via DAP pathway; (S)-tetrahydrodipicolinate from L-aspartate: step 3/4. Its function is as follows. Catalyzes the condensation of (S)-aspartate-beta-semialdehyde [(S)-ASA] and pyruvate to 4-hydroxy-tetrahydrodipicolinate (HTPA). In Leptothrix cholodnii (strain ATCC 51168 / LMG 8142 / SP-6) (Leptothrix discophora (strain SP-6)), this protein is 4-hydroxy-tetrahydrodipicolinate synthase.